Reading from the N-terminus, the 170-residue chain is MESRSKPQFLAILTLFSVLFSQSLAWPLYGPPSSVRLDDRLQFEGAGDPDQVSLKADSDILQNALAENDTPYYDVSRNARHADGVFTSDYSRLLGQISAKKYLESLIGKRISSSISEDPVPVKRHSDAVFTDNYTRLRKQMAVKKYLNSILNGKRSSEGDSPDFLEELEK.

Positions 1–21 are cleaved as a signal peptide; sequence MESRSKPQFLAILTLFSVLFS. Positions 22–79 are excised as a propeptide; the sequence is QSLAWPLYGPPSSVRLDDRLQFEGAGDPDQVSLKADSDILQNALAENDTPYYDVSRNA. Serine 76 carries the post-translational modification Phosphoserine. Isoleucine 107 is subject to Isoleucine amide. Asparagine 133 carries N-linked (GlcNAc...) asparagine glycosylation. An Asparagine amide modification is found at asparagine 152. Positions 156–170 are excised as a propeptide; it reads SSEGDSPDFLEELEK.

Belongs to the glucagon family.

The protein resides in the secreted. In terms of biological role, VIP is a neuropeptide involved in a diverse array of physiological processes through activating the PACAP subfamily of class B1 G protein-coupled receptors: VIP receptor 1 (VPR1) and VIP receptor 2 (VPR2). Abundantly expressed throughout the CNS and peripheral nervous systems where they primarily exert neuroprotective and immune modulatory roles. Also causes vasodilation, lowers arterial blood pressure, stimulates myocardial contractility, increases glycogenolysis and relaxes the smooth muscle of trachea, stomach and gall bladder. Functionally, PHM-27 and PHV-42 are two bioactive forms from proteolysis of the same precursor protein, that cause vasodilation. PHM-27 is a potent agonist of the calcitonin receptor CALCR, with similar efficacy as calcitonin. This is VIP peptides (Vip) from Rattus norvegicus (Rat).